We begin with the raw amino-acid sequence, 241 residues long: Uridylate kinase (241 aa).

Residue 14-17 (KLSG) coordinates ATP. G56 contacts UMP. ATP-binding residues include G57 and R61. Residues D77 and 138-145 (TGNPFFTT) contribute to the UMP site. T165, Y171, and D174 together coordinate ATP.

This sequence belongs to the UMP kinase family. Homohexamer.

Its subcellular location is the cytoplasm. The enzyme catalyses UMP + ATP = UDP + ADP. The protein operates within pyrimidine metabolism; CTP biosynthesis via de novo pathway; UDP from UMP (UMPK route): step 1/1. Inhibited by UTP. In terms of biological role, catalyzes the reversible phosphorylation of UMP to UDP. The sequence is that of Uridylate kinase from Psychrobacter cryohalolentis (strain ATCC BAA-1226 / DSM 17306 / VKM B-2378 / K5).